A 273-amino-acid polypeptide reads, in one-letter code: 2,3,4,5-tetrahydropyridine-2,6-dicarboxylate N-succinyltransferase (273 aa).

Residues Arg-104 and Asp-141 each contribute to the substrate site.

This sequence belongs to the transferase hexapeptide repeat family. Homotrimer.

The protein resides in the cytoplasm. It carries out the reaction (S)-2,3,4,5-tetrahydrodipicolinate + succinyl-CoA + H2O = (S)-2-succinylamino-6-oxoheptanedioate + CoA. It participates in amino-acid biosynthesis; L-lysine biosynthesis via DAP pathway; LL-2,6-diaminopimelate from (S)-tetrahydrodipicolinate (succinylase route): step 1/3. This is 2,3,4,5-tetrahydropyridine-2,6-dicarboxylate N-succinyltransferase from Nitrosococcus oceani (strain ATCC 19707 / BCRC 17464 / JCM 30415 / NCIMB 11848 / C-107).